A 99-amino-acid chain; its full sequence is Cysteine-rich C-terminal protein 1 (99 aa).

Disordered stretches follow at residues 1–42 (MSSQ…CCGS) and 65–99 (RRRR…CSGC). Over residues 22–32 (APCPAPAPTPA) the composition is skewed to pro residues. Positions 83 to 99 (QRSQRSNNRSSGCCSGC) are enriched in low complexity.

The polypeptide is Cysteine-rich C-terminal protein 1 (CRCT1) (Homo sapiens (Human)).